The primary structure comprises 391 residues: Probable FAD-dependent oxidoreductase PA4991 (391 aa).

Residues A17, E36, 44 to 45, 49 to 51, and 346 to 347 each bind FAD; these read QS, QGI, and LA.

The protein belongs to the DAO family. In terms of assembly, monomer. The cofactor is FAD.

Probably functions as a FAD-dependent oxidoreductase, whose physiological substrate is unknown. Does not display amino-acid oxidase or glycerol-3-phosphate dehydrogenase activities. Is essential for growth of P.aeruginosa in the sputum of cystic fibrosis patients. The polypeptide is Probable FAD-dependent oxidoreductase PA4991 (Pseudomonas aeruginosa (strain ATCC 15692 / DSM 22644 / CIP 104116 / JCM 14847 / LMG 12228 / 1C / PRS 101 / PAO1)).